The sequence spans 231 residues: UMP-CMP kinase (231 aa).

57–62 (GSGKGT) is a binding site for ATP. Residues 77–106 (SAGDLLRREIASGSAYGSVILSTIREGKIV) form an NMP region. A ribonucleoside 5'-phosphate is bound by residues Arg83, 104-106 (KIV), and 131-134 (GFPR). Asn138 serves as a coordination point for CMP. Residues 169–177 (NRNQGRVDD) are LID. Arg170 is a binding site for ATP. Positions 174 and 185 each coordinate a ribonucleoside 5'-phosphate. Gly213 is an ATP binding site.

Belongs to the adenylate kinase family. UMP-CMP kinase subfamily. Monomer. Mg(2+) serves as cofactor.

Its subcellular location is the cytoplasm. It localises to the nucleus. The catalysed reaction is CMP + ATP = CDP + ADP. The enzyme catalyses dCMP + ATP = dCDP + ADP. It catalyses the reaction UMP + ATP = UDP + ADP. Functionally, catalyzes the phosphorylation of pyrimidine nucleoside monophosphates at the expense of ATP. Plays an important role in de novo pyrimidine nucleotide biosynthesis. Has preference for UMP and CMP as phosphate acceptors. The sequence is that of UMP-CMP kinase from Prunus armeniaca (Apricot).